A 57-amino-acid chain; its full sequence is Large ribosomal subunit protein bL32c (57 aa).

This sequence belongs to the bacterial ribosomal protein bL32 family.

The protein resides in the plastid. The protein localises to the chloroplast. The protein is Large ribosomal subunit protein bL32c of Acorus calamus (Sweet flag).